The primary structure comprises 145 residues: Hemoglobin subunit beta-1 (145 aa).

Residues 1-145 enclose the Globin domain; sequence TFTNDESQHI…VEAALATGYH (145 aa). The heme b site is built by His62 and His91.

This sequence belongs to the globin family. Major hemoglobin is a tetramer of two alpha-1 chains and two beta-1 chains. Red blood cells.

Involved in oxygen transport from the lung to the various peripheral tissues. The chain is Hemoglobin subunit beta-1 (HBB1) from Triturus cristatus (Great crested newt).